We begin with the raw amino-acid sequence, 956 residues long: Glutamate receptor ionotropic, kainate 4 (956 aa).

Residues 1 to 20 (MPRVSAPLVLLPAWLLMVAC) form the signal peptide. At 21-545 (SPHSLRIAAI…YFSSLDPFSP (525 aa)) the chain is on the extracellular side. 8 N-linked (GlcNAc...) asparagine glycosylation sites follow: Asn-158, Asn-220, Asn-272, Asn-286, Asn-323, Asn-408, Asn-415, and Asn-479. Gly-500, Thr-502, and Arg-507 together coordinate L-glutamate. The helical transmembrane segment at 546 to 566 (GVWLFMLLAYLAVSCVLFLVA) threads the bilayer. Over 567 to 623 (RLTPYEWYSPHPCAQGRCNLLVNQYSLGNSLWFPVGGFMQQGSTIAPRALSTRCVSG) the chain is Cytoplasmic. Residues 624–644 (VWWAFTLIIISSYTANLAAFL) traverse the membrane as a helical segment. The Extracellular portion of the chain corresponds to 645–804 (TVQRMEVPIE…HRAKGLGMEN (160 aa)). L-glutamate contacts are provided by Ser-674, Ser-675, and Glu-723. N-linked (GlcNAc...) asparagine glycosylation is present at Asn-736. A helical transmembrane segment spans residues 805–825 (IGGIFVVLICGLIVAIFMAML). Over 826–956 (EFLWTLRHSE…DKTTNSSEPE (131 aa)) the chain is Cytoplasmic. Positions 931–956 (LRARPSPARSEESLEWDKTTNSSEPE) are disordered. A compositionally biased stretch (basic and acidic residues) spans 939-948 (RSEESLEWDK).

It belongs to the glutamate-gated ion channel (TC 1.A.10.1) family. GRIK4 subfamily. In terms of assembly, homodimer. Can form functional heteromeric receptors with GRIK1, GRIK2 and GRIK3. Strong expression in hippocampal CA3 pyramidal cells. Low expression in hippocampal dentate granule cells, in layers II, V and VI of the cortex, and in cerebellar Purkinje cells. No expression in the striatum, reticular thalamus, hypothalamus or amygdaloid complex.

It is found in the cell membrane. Its subcellular location is the postsynaptic cell membrane. The protein resides in the presynaptic cell membrane. In terms of biological role, ionotropic glutamate receptor that functions as a cation-permeable ligand-gated ion channel, gated by L-glutamate and the glutamatergic agonist kainic acid. Cannot form functional channels on its own and shows channel activity only in heteromeric assembly with GRIK1, GRIK2 and GRIK3 subunits. In Rattus norvegicus (Rat), this protein is Glutamate receptor ionotropic, kainate 4 (Grik4).